Reading from the N-terminus, the 351-residue chain is Protein FAM118B (351 aa).

Ala-2 is subject to N-acetylalanine. Ser-9 bears the Phosphoserine mark.

It belongs to the FAM118 family.

It localises to the nucleus. It is found in the cajal body. Its function is as follows. May play a role in Cajal bodies formation. In Homo sapiens (Human), this protein is Protein FAM118B (FAM118B).